A 408-amino-acid polypeptide reads, in one-letter code: Histidine--tRNA ligase (408 aa).

Belongs to the class-II aminoacyl-tRNA synthetase family. Homodimer.

It is found in the cytoplasm. It catalyses the reaction tRNA(His) + L-histidine + ATP = L-histidyl-tRNA(His) + AMP + diphosphate + H(+). In Campylobacter jejuni subsp. jejuni serotype O:2 (strain ATCC 700819 / NCTC 11168), this protein is Histidine--tRNA ligase.